A 219-amino-acid chain; its full sequence is Ribose-5-phosphate isomerase A (219 aa).

Substrate-binding positions include Thr-28–Thr-31, Asp-81–Asp-84, and Lys-94–Gly-97. Catalysis depends on Glu-103, which acts as the Proton acceptor. Substrate is bound at residue Lys-121.

Belongs to the ribose 5-phosphate isomerase family. Homodimer.

It carries out the reaction aldehydo-D-ribose 5-phosphate = D-ribulose 5-phosphate. Its pathway is carbohydrate degradation; pentose phosphate pathway; D-ribose 5-phosphate from D-ribulose 5-phosphate (non-oxidative stage): step 1/1. Its function is as follows. Catalyzes the reversible conversion of ribose-5-phosphate to ribulose 5-phosphate. This chain is Ribose-5-phosphate isomerase A, found in Methylibium petroleiphilum (strain ATCC BAA-1232 / LMG 22953 / PM1).